The following is a 475-amino-acid chain: UDP-N-acetylmuramate--L-alanine ligase (475 aa).

114–120 (GTHGKTT) serves as a coordination point for ATP.

This sequence belongs to the MurCDEF family.

Its subcellular location is the cytoplasm. It carries out the reaction UDP-N-acetyl-alpha-D-muramate + L-alanine + ATP = UDP-N-acetyl-alpha-D-muramoyl-L-alanine + ADP + phosphate + H(+). It functions in the pathway cell wall biogenesis; peptidoglycan biosynthesis. Functionally, cell wall formation. This Bartonella quintana (strain Toulouse) (Rochalimaea quintana) protein is UDP-N-acetylmuramate--L-alanine ligase.